Consider the following 183-residue polypeptide: Auxin-responsive protein IAA20 (183 aa).

Disordered regions lie at residues 1–23 (MELE…TATA) and 42–77 (GFEE…NKRR). The short motif at 3–7 (LELGL) is the EAR-like (transcriptional repression) element. Residues 98 to 183 (GGYVKVKMEG…KSVKRLKILV (86 aa)) enclose the PB1 domain.

The protein belongs to the Aux/IAA family. As to quaternary structure, homodimers and heterodimers. Expressed at very low levels in etiolated seedlings and flowers.

It is found in the nucleus. In terms of biological role, aux/IAA proteins are short-lived transcriptional factors that function as repressors of early auxin response genes at low auxin concentrations. The chain is Auxin-responsive protein IAA20 (IAA20) from Oryza sativa subsp. japonica (Rice).